Consider the following 1183-residue polypeptide: Ribosome biogenesis protein BMS1 (1183 aa).

Residues methionine 1–threonine 23 are compositionally biased toward basic residues. A disordered region spans residues methionine 1 to methionine 39. The region spanning proline 68 to arginine 233 is the Bms1-type G domain. Residues glycine 76–threonine 83 are G1. Position 76–83 (glycine 76–threonine 83) interacts with ATP. Positions proline 104 to valine 108 are G2. Residues glutamate 119–alanine 122 are G3. The G4 stretch occupies residues threonine 172–aspartate 175. A G5 region spans residues leucine 207–proline 216. Residues glutamate 427–proline 494 form a disordered region. A compositionally biased stretch (acidic residues) spans aspartate 435–glutamate 447. Serine 438 carries the phosphoserine modification. Positions lysine 451–isoleucine 461 are enriched in basic residues. Over residues glutamate 468–aspartate 491 the composition is skewed to acidic residues. A phosphoserine mark is found at serine 478 and serine 492. Residues threonine 504 and threonine 516 each carry the phosphothreonine modification. Phosphoserine is present on residues serine 518 and serine 523. The tract at residues lysine 536–serine 559 is RCL1-binding. 2 positions are modified to phosphoserine: serine 574 and serine 578. Disordered stretches follow at residues glycine 639–aspartate 709 and lysine 1123–arginine 1183. Residues glutamate 653 to asparagine 697 show a composition bias toward acidic residues. Basic and acidic residues-rich tracts occupy residues lysine 1123 to lysine 1136, alanine 1143 to tyrosine 1160, and aspartate 1174 to arginine 1183.

The protein belongs to the TRAFAC class translation factor GTPase superfamily. Bms1-like GTPase family. BMS1 subfamily. In terms of assembly, interacts directly with RCL1 and the U3 snoRNA to form a stable subcomplex. Component of the 90S small subunit processome also known as 90S pre-ribosome that consists of the 35S pre-rRNA, early-associating ribosomal proteins most of which are part of the small ribosomal subunit, the U3 snoRNA and associated proteins.

It localises to the cytoplasm. Its subcellular location is the nucleus. It is found in the nucleolus. It catalyses the reaction GTP + H2O = GDP + phosphate + H(+). With respect to regulation, interactions with RCL1 stimulates its GTPase and U3 snoRNA binding activities. RCL1 activates BMS1 by promoting GDP/GTP exchange. In terms of biological role, GTPase required for synthesis of 40S ribosomal subunits and for processing the 35S pre-rRNA at sites A0, A1, and A2. Controls access of pre-ribosomal RNA intermediates to RCL1 during ribosome biogenesis by binding of RCL1 in a GTP-dependent manner and, via its affinity to U3 snoRNA, delivering it to pre-ribosomes. GTP-binding and/or GTP hydrolysis may induce conformational rearrangements within the BMS1-RCL1 complex allowing the interaction of RCL1 with its RNA substrate. Required for RCL1 import into the nucleus. This Saccharomyces cerevisiae (strain ATCC 204508 / S288c) (Baker's yeast) protein is Ribosome biogenesis protein BMS1 (BMS1).